The sequence spans 60 residues: MRARSAIFSRTSLSLCSARLLASSQWVPSSSRSSSAISSRLKPSRWADFTKRTRVTSASP.

The sequence is that of Putative mercuric resistance protein from Pseudomonas aeruginosa.